Reading from the N-terminus, the 195-residue chain is Imidazoleglycerol-phosphate dehydratase (195 aa).

It belongs to the imidazoleglycerol-phosphate dehydratase family.

Its subcellular location is the cytoplasm. It catalyses the reaction D-erythro-1-(imidazol-4-yl)glycerol 3-phosphate = 3-(imidazol-4-yl)-2-oxopropyl phosphate + H2O. Its pathway is amino-acid biosynthesis; L-histidine biosynthesis; L-histidine from 5-phospho-alpha-D-ribose 1-diphosphate: step 6/9. The chain is Imidazoleglycerol-phosphate dehydratase from Beijerinckia indica subsp. indica (strain ATCC 9039 / DSM 1715 / NCIMB 8712).